The following is a 706-amino-acid chain: Amino-acid acetyltransferase, mitochondrial (706 aa).

2 disordered regions span residues 1 to 25 (MSSRVLASRAAQPLKRHPTVVGAGD) and 367 to 403 (NPANNSQGESVVTNPISDSNAVSESASTEPTSTPAKQ). Residues 1-35 (MSSRVLASRAAQPLKRHPTVVGAGDEAYPTPRRCF) constitute a mitochondrion transit peptide. Residues 367 to 388 (NPANNSQGESVVTNPISDSNAV) are compositionally biased toward polar residues. The span at 389–401 (SESASTEPTSTPA) shows a compositional bias: low complexity. The 170-residue stretch at 527-696 (TRPNMNLDDP…YEAVCRSIQP (170 aa)) folds into the N-acetyltransferase domain.

This sequence belongs to the acetyltransferase family.

The protein resides in the mitochondrion. The enzyme catalyses L-glutamate + acetyl-CoA = N-acetyl-L-glutamate + CoA + H(+). It functions in the pathway amino-acid biosynthesis; L-arginine biosynthesis; N(2)-acetyl-L-ornithine from L-glutamate: step 1/4. Functionally, N-acetylglutamate synthase involved in arginine biosynthesis. The protein is Amino-acid acetyltransferase, mitochondrial (arg2) of Emericella nidulans (strain FGSC A4 / ATCC 38163 / CBS 112.46 / NRRL 194 / M139) (Aspergillus nidulans).